Consider the following 456-residue polypeptide: RuvB-like 1 (456 aa).

A Glycyl lysine isopeptide (Lys-Gly) (interchain with G-Cter in SUMO2) cross-link involves residue lysine 2. 70–77 is a binding site for ATP; that stretch reads GPPGTGKT. Lysine 225 participates in a covalent cross-link: Glycyl lysine isopeptide (Lys-Gly) (interchain with G-Cter in SUMO1); alternate. Residue lysine 225 forms a Glycyl lysine isopeptide (Lys-Gly) (interchain with G-Cter in SUMO2); alternate linkage. Residue lysine 445 forms a Glycyl lysine isopeptide (Lys-Gly) (interchain with G-Cter in SUMO2) linkage. Lysine 453 bears the N6-acetyllysine mark.

This sequence belongs to the RuvB family. As to quaternary structure, forms homohexameric rings. Can form a dodecamer with RUVBL2 made of two stacked hexameric rings; however, even though RUVBL1 and RUVBL2 are present in equimolar ratio, the oligomeric status of each hexamer is not known. Oligomerization may regulate binding to nucleic acids and conversely, binding to nucleic acids may affect the dodecameric assembly. Interaction of the complex with DHX34 results in conformational changes of the N-terminus of the RUVBL2 subunits, resulting in loss of nucleotide binding ability and ATP hydrolysis of the complex. Interacts with the transcriptional activation domain of MYC. Component of the RNA polymerase II holoenzyme complex. May also act to bridge the LEF1/TCF1-CTNNB1 complex and TBP. Component of the NuA4 histone acetyltransferase complex which contains the catalytic subunit KAT5/TIP60 and the subunits EP400, TRRAP/PAF400, BRD8/SMAP, EPC1, DMAP1/DNMAP1, RUVBL1/TIP49, RUVBL2, ING3, actin, ACTL6A/BAF53A, MORF4L1/MRG15, MORF4L2/MRGX, MRGBP, YEATS4/GAS41, VPS72/YL1 and MEAF6. The NuA4 complex interacts with MYC and the adenovirus E1A protein. RUVBL1 interacts with EP400. Component of a NuA4-related complex which contains EP400, TRRAP/PAF400, SRCAP, BRD8/SMAP, EPC1, DMAP1/DNMAP1, RUVBL1/TIP49, RUVBL2, actin, ACTL6A/BAF53A, VPS72 and YEATS4/GAS41. Component of the BAF53 complex, at least composed of ACTL6A/BAF53A, RUVBL1/TIP49, SMARCA2/BRM, and TRRAP/PAF400. Component of some MLL1/MLL complex, at least composed of the core components KMT2A/MLL1, ASH2L, HCFC1/HCF1, WDR5 and RBBP5, as well as the facultative components BACC1, CHD8, E2F6, HSP70, INO80C, KANSL1, LAS1L, MAX, MCRS1, MGA, MYST1/MOF, PELP1, PHF20, PRP31, RING2, RUVB1/TIP49A, RUVB2/TIP49B, SENP3, TAF1, TAF4, TAF6, TAF7, TAF9 and TEX10. Associates with alpha and gamma tubulins, particularly during metaphase and early anaphase. Interacts with NPAT. Component of the chromatin-remodeling INO80 complex; specifically part of a complex module associated with the helicase ATP-binding and the helicase C-terminal domain of INO80. Interacts with IGHMBP2. Interacts with OFD1. Interacts with HINT1. Component of a complex with USP49 and PSMC5. Component of a SWR1-like complex. Component of the R2TP complex composed at least of RUVBL1, RUVBL2, RPAP3 and PIHD1. Component of the PAQosome complex which is responsible for the biogenesis of several protein complexes and which consists of R2TP complex members RUVBL1, RUVBL2, RPAP3 and PIH1D1, URI complex members PFDN2, PFDN6, PDRG1, UXT and URI1 as well as ASDURF, POLR2E and DNAAF10/WDR92. Interacts with PIH1D1. Interacts with ITFG1. Interacts with WAC; WAC positively regulates MTOR activity by promoting the assembly of the TTT complex composed of TELO2, TTI1 and TTI2 and the RUVBL complex composed of RUVBL1 and RUVBL2 into the TTT-RUVBL complex which leads to the dimerization of the mTORC1 complex and its subsequent activation. The RUVBL1/RUVBL2 complex interacts with ZNHIT1 (via HIT-type zinc finger), ZNHIT3 (via HIT-type zinc finger), ZNHIT6 (via HIT-type zinc finger) and DDX59/ZNHIT5 (via HIT-type zinc finger) in the presence of ADP. Interacts with NOPCHAP1; the interaction is direct and disrupted upon ATP binding. Interacts with SMG1. Interacts with NOP2, NOP56 and NUFIP1.

It is found in the nucleus matrix. Its subcellular location is the nucleus. The protein resides in the nucleoplasm. It localises to the cytoplasm. The protein localises to the membrane. It is found in the cytoskeleton. Its subcellular location is the microtubule organizing center. The protein resides in the centrosome. It localises to the dynein axonemal particle. The catalysed reaction is ATP + H2O = ADP + phosphate + H(+). Functionally, possesses single-stranded DNA-stimulated ATPase and ATP-dependent DNA helicase (3' to 5') activity; hexamerization is thought to be critical for ATP hydrolysis and adjacent subunits in the ring-like structure contribute to the ATPase activity. Component of the NuA4 histone acetyltransferase complex which is involved in transcriptional activation of select genes principally by acetylation of nucleosomal histones H4 and H2A. This modification may both alter nucleosome-DNA interactions and promote interaction of the modified histones with other proteins which positively regulate transcription. This complex may be required for the activation of transcriptional programs associated with oncogene and proto-oncogene mediated growth induction, tumor suppressor mediated growth arrest and replicative senescence, apoptosis, and DNA repair. The NuA4 complex ATPase and helicase activities seem to be, at least in part, contributed by the association of RUVBL1 and RUVBL2 with EP400. NuA4 may also play a direct role in DNA repair when recruited to sites of DNA damage. Component of a SWR1-like complex that specifically mediates the removal of histone H2A.Z/H2AZ1 from the nucleosome. Proposed core component of the chromatin remodeling INO80 complex which exhibits DNA- and nucleosome-activated ATPase activity and catalyzes ATP-dependent nucleosome sliding. Plays an essential role in oncogenic transformation by MYC and also modulates transcriptional activation by the LEF1/TCF1-CTNNB1 complex. Essential for cell proliferation. May be able to bind plasminogen at cell surface and enhance plasminogen activation. The sequence is that of RuvB-like 1 (Ruvbl1) from Mus musculus (Mouse).